The sequence spans 467 residues: Venom prothrombin activator pseutarin-C catalytic subunit (467 aa).

The first 22 residues, 1–22 (MAPQLLLCLILTFLWSLPEAES), serve as a signal peptide directing secretion. Residues 23 to 40 (NVFLKSKVANRFLQRTKR) constitute a propeptide that is removed on maturation. A Gla domain is found at 41 to 86 (ANSLVEEFKSGNIERECIEERCSKEEAREVFEDDEKTETFWNVYVD). 10 positions are modified to 4-carboxyglutamate: glutamate 46, glutamate 47, glutamate 54, glutamate 56, glutamate 59, glutamate 60, glutamate 65, glutamate 66, glutamate 69, and glutamate 72. Cysteine 57 and cysteine 62 are oxidised to a cystine. The 37-residue stretch at 86-122 (DGDQCSSNPCHYRGICKDGIGSYTCTCLSGYEGKNCE) folds into the EGF-like 1; calcium-binding domain. Intrachain disulfides connect cysteine 90/cysteine 101, cysteine 95/cysteine 110, cysteine 112/cysteine 121, cysteine 129/cysteine 140, cysteine 136/cysteine 149, cysteine 151/cysteine 164, cysteine 172/cysteine 329, cysteine 216/cysteine 221, cysteine 236/cysteine 252, cysteine 377/cysteine 391, and cysteine 402/cysteine 430. The O-linked (Hex...) serine glycan is linked to serine 92. The EGF-like 2 domain maps to 129-164 (CRVDNGNCWHFCKSVQNDIQCSCAEGYLLGEDGHSC). A propeptide spans 182–209 (REASLPDFVQSHNATLLKKSDNPSPDIR) (activation peptide). In terms of domain architecture, Peptidase S1 spans 210–454 (IVNGMDCKLG…FIPWIKRIMR (245 aa)). Histidine 251 functions as the Charge relay system in the catalytic mechanism. Asparagine 254 carries N-linked (GlcNAc...) asparagine glycosylation. Aspartate 309 functions as the Charge relay system in the catalytic mechanism. Catalysis depends on serine 406, which acts as the Charge relay system.

It belongs to the peptidase S1 family. Snake venom subfamily. Heterodimer of a light and a heavy chains; disulfide-linked. Is associated with pseutarin-C non-catalytic subunit (AC Q7SZN0) in a non-covalent manner. In terms of processing, gamma-carboxyglutamate residues are formed by vitamin K dependent carboxylation. These residues are essential for the binding of calcium. In terms of tissue distribution, expressed by the venom gland.

The protein resides in the secreted. It catalyses the reaction Selective cleavage of Arg-|-Thr and then Arg-|-Ile bonds in prothrombin to form thrombin.. Activated by calcium and negatively charged phospholipids. In terms of biological role, snake prothrombin activator that attacks the hemostatic system of prey. This non-catalytic subunit is functionally similar to blood coagulation factor V. It serves as a critical cofactor for the prothrombinase activity of the catalytic subunit, which is similar to the blood coagulation factor X. The complex converts prothrombin to thrombin by sequential cleavage at two positions, Arg-320 followed by Arg-271. Cleavage at Arg-320 produces an active intermediate known as meizothrombin. Meizothrombin is the 'second' substrate for prothrombinase, and it docks in an altered manner to present the second cleavage site (271). Cleavage at Arg-271 releases active thrombin from its pro-fragment. This order of events is reversed if the protease component of prothrombinase is used on its own, suggesting that the 271 site is inherently more accessible to proteolysis. The complex converts prothrombin to thrombin in presence but also in the absence of membrane. The chain is Venom prothrombin activator pseutarin-C catalytic subunit from Pseudonaja textilis (Eastern brown snake).